Here is a 130-residue protein sequence, read N- to C-terminus: Small ribosomal subunit protein uS11c (130 aa).

This sequence belongs to the universal ribosomal protein uS11 family. In terms of assembly, part of the 30S ribosomal subunit.

Its subcellular location is the plastid. It localises to the chloroplast. This chain is Small ribosomal subunit protein uS11c, found in Marchantia polymorpha (Common liverwort).